A 171-amino-acid chain; its full sequence is 3-hydroxydecanoyl-[acyl-carrier-protein] dehydratase (171 aa).

His70 is an active-site residue.

Belongs to the thioester dehydratase family. FabA subfamily. Homodimer.

The protein resides in the cytoplasm. It carries out the reaction a (3R)-hydroxyacyl-[ACP] = a (2E)-enoyl-[ACP] + H2O. It catalyses the reaction (3R)-hydroxydecanoyl-[ACP] = (2E)-decenoyl-[ACP] + H2O. The catalysed reaction is (2E)-decenoyl-[ACP] = (3Z)-decenoyl-[ACP]. Its pathway is lipid metabolism; fatty acid biosynthesis. Necessary for the introduction of cis unsaturation into fatty acids. Catalyzes the dehydration of (3R)-3-hydroxydecanoyl-ACP to E-(2)-decenoyl-ACP and then its isomerization to Z-(3)-decenoyl-ACP. Can catalyze the dehydratase reaction for beta-hydroxyacyl-ACPs with saturated chain lengths up to 16:0, being most active on intermediate chain length. In Xanthomonas oryzae pv. oryzae (strain MAFF 311018), this protein is 3-hydroxydecanoyl-[acyl-carrier-protein] dehydratase.